A 3930-amino-acid chain; its full sequence is Hybrid PKS-NRPS synthetase apdA (3930 aa).

The region spanning 2 to 440 (QDLIAIVGSA…GTNAHAIIEG (439 aa)) is the Ketosynthase family 3 (KS3) domain. Active-site for beta-ketoacyl synthase activity residues include Cys-176, His-313, and His-361. The malonyl-CoA:ACP transacylase (MAT) domain stretch occupies residues 557-879 (IFTGQGAQWA…MRRGDNEIEA (323 aa)). Positions 948 to 1085 (HELLGRRVPD…GRLIINYGDP (138 aa)) are N-terminal hotdog fold. The dehydratase (DH) domain stretch occupies residues 948–1251 (HELLGRRVPD…SMKSMSEPQP (304 aa)). The region spanning 948–1252 (HELLGRRVPD…MKSMSEPQPE (305 aa)) is the PKS/mFAS DH domain. His-980 (proton acceptor; for dehydratase activity) is an active-site residue. A C-terminal hotdog fold region spans residues 1100 to 1252 (NVPVDMGRFY…MKSMSEPQPE (153 aa)). Asp-1159 (proton donor; for dehydratase activity) is an active-site residue. Residues 1389-1588 (QDDMLNRFYM…FSGLDCLAPD (200 aa)) are methyltransferase (MT) domain. Residues 2088-2229 (ATYLLAGMTG…SLASIIGNAA (142 aa)) are ketoreductase (KR) domain. In terms of domain architecture, Carrier 1 spans 2326–2403 (AVIPIVQEAF…QICEDAVRQF (78 aa)). Ser-2363 is modified (O-(pantetheine 4'-phosphoryl)serine). Disordered stretches follow at residues 2414-2433 (VAPN…SNAT) and 2444-2494 (DAAN…VDAD). Positions 2445 to 2473 (AANGDYESSSQGDDSRGNSSSSSSHTSPS) are enriched in low complexity. The segment at 2509–2937 (PASFAQSRLW…SLPVNQLPVT (429 aa)) is condensation (C) domain. Residues 2971 to 3371 (KSFPEETAIK…GTLIFMGRMD (401 aa)) form an adenylation (A) (KR) domain region. The reductase (RED) domain stretch occupies residues 2971 to 3371 (KSFPEETAIK…GTLIFMGRMD (401 aa)). The region spanning 3493 to 3572 (RHLSLAEGEL…QMARRISRRK (80 aa)) is the Carrier 2 domain. Position 3532 is an O-(pantetheine 4'-phosphoryl)serine (Ser-3532).

It in the C-terminal section; belongs to the NRP synthetase family.

The protein operates within secondary metabolite biosynthesis. Its function is as follows. Hybrid PKS-NRPS synthetase; part of the gene cluster that mediates the biosynthesis of aspyridones. The polyketide-amino acid backbone preaspyridone A is first assembled by the PKS-NRPS hybrid apdA. The assembly of preaspyridone A is initiated by loading of malonyl-CoA onto apdA, followed by decarboxylation to yield the acetyl starter unit. The growing polyketide chain then elongates into a tetraketide. The adpA PKS module catalyzes three Claisen condensations, as well as beta-keto processing and methylation. Alpha-methylation step during polyketide synthesis is a prerequisite and a key checkpoint for chain transfer between PKS and NRPS modules. The downstream NRPS module contains the condensation (C), adenylation (A), and thiolation (T) domains and catalyzes the incorporation of tyrosine via the formation of the L-tyrosinyl-thioester and the amide linkage between L-tyrosinyl-thioester and the tetraketide. The bimodular assembly line is terminated with a reductase (R) domain that facilitates formation and release of the tetramic acid product. Because apdA lacks a designated enoylreductase (ER) domain, the required activity is provided the enoyl reductase apdC. ApdC appears to operate with different stereoselectivity in different PKS cycle. Combined with apdC, apdA is proposed to synthesize preaspyridone A via about 20 enzymatic steps. A number of oxidative steps performed successively by the cytochrome P450 monooxygenases apdE and apdB are required for the conversion of preaspyridone A to aspyridone A. The cytochrome P450 monooxygenase apdE is responsible for the oxidative dephenylation of preaspyridone A. Finally, the predicted FAD-dependent monooxygenase apdD and the acyl-CoA dehydrogenase apdG may be involved in the transformation of aspyridone A into aspyridone B. The protein is Hybrid PKS-NRPS synthetase apdA of Emericella nidulans (strain FGSC A4 / ATCC 38163 / CBS 112.46 / NRRL 194 / M139) (Aspergillus nidulans).